A 500-amino-acid polypeptide reads, in one-letter code: Trehalose-6-phosphate synthase (500 aa).

Arg28 serves as a coordination point for D-glucose 6-phosphate. Residue 48 to 49 participates in UDP-alpha-D-glucose binding; it reads GG. Residues Tyr108 and Asp162 each coordinate D-glucose 6-phosphate. The UDP-alpha-D-glucose site is built by Arg304 and Lys309. D-glucose 6-phosphate is bound at residue Arg342. 407–411 serves as a coordination point for UDP-alpha-D-glucose; it reads LVAKE.

It belongs to the glycosyltransferase 20 family. As to quaternary structure, homotetramer.

The enzyme catalyses ADP-alpha-D-glucose + D-glucose 6-phosphate = alpha,alpha-trehalose 6-phosphate + ADP + H(+). The catalysed reaction is CDP-alpha-D-glucose + D-glucose 6-phosphate = alpha,alpha-trehalose 6-phosphate + CDP + H(+). It catalyses the reaction GDP-alpha-D-glucose + D-glucose 6-phosphate = alpha,alpha-trehalose 6-phosphate + GDP + H(+). It carries out the reaction TDP-alpha-D-glucose + D-glucose 6-phosphate = 5-methyl-UDP + alpha,alpha-trehalose 6-phosphate + H(+). The enzyme catalyses D-glucose 6-phosphate + UDP-alpha-D-glucose = alpha,alpha-trehalose 6-phosphate + UDP + H(+). The protein operates within glycan biosynthesis; trehalose biosynthesis. Functionally, probably involved in the osmoprotection via the biosynthesis of trehalose and in the production of glycogen and alpha-glucan via the TreS-Pep2 branch involved in the biosynthesis of maltose-1-phosphate (M1P). Catalyzes the transfer of glucose from UDP-glucose (UDP-Glc) to D-glucose 6-phosphate (Glc-6-P) to form trehalose-6-phosphate. Probably also able to use ADP-Glc, CDP-Glc, GDP-Glc and TDP-Glc as glucosyl donors. The polypeptide is Trehalose-6-phosphate synthase (Mycobacterium tuberculosis (strain CDC 1551 / Oshkosh)).